Here is an 852-residue protein sequence, read N- to C-terminus: Eukaryotic translation initiation factor 3 subunit C (852 aa).

The segment at 1-90 (MSRFFVSGYP…DSDSDDEGRK (90 aa)) is disordered. Acidic residues predominate over residues 14-57 (SSEEEDLLSSSEEELLSSESEEDNFSSDSEFGNDSDNDSSDSDS). One can recognise a PCI domain in the interval 597 to 772 (FHMHINLELL…SFVNFTTNDH (176 aa)). Residues 798 to 809 (TASNGYSRKQPM) show a composition bias toward polar residues. Residues 798–852 (TASNGYSRKQPMQQQQQQQQQQQQQKEQKELLHEENNRFRYANVNANNDEFQTTA) are disordered. The segment covering 810–822 (QQQQQQQQQQQQQ) has biased composition (low complexity). Basic and acidic residues predominate over residues 823–835 (KEQKELLHEENNR). Residues 841–852 (VNANNDEFQTTA) are compositionally biased toward polar residues.

It belongs to the eIF-3 subunit C family. As to quaternary structure, component of the eukaryotic translation initiation factor 3 (eIF-3) complex.

It is found in the cytoplasm. Its function is as follows. Component of the eukaryotic translation initiation factor 3 (eIF-3) complex, which is involved in protein synthesis of a specialized repertoire of mRNAs and, together with other initiation factors, stimulates binding of mRNA and methionyl-tRNAi to the 40S ribosome. The eIF-3 complex specifically targets and initiates translation of a subset of mRNAs involved in cell proliferation. In Debaryomyces hansenii (strain ATCC 36239 / CBS 767 / BCRC 21394 / JCM 1990 / NBRC 0083 / IGC 2968) (Yeast), this protein is Eukaryotic translation initiation factor 3 subunit C.